Consider the following 621-residue polypeptide: Type 2 DNA topoisomerase 6 subunit B (621 aa).

ATP is bound by residues Asn48, Asp80, 101–102 (SR), 111–118 (GQQGIGIS), and Lys435.

Belongs to the TOP6B family. Homodimer. Heterotetramer of two Top6A and two Top6B chains.

The catalysed reaction is ATP-dependent breakage, passage and rejoining of double-stranded DNA.. In terms of biological role, relaxes both positive and negative superturns and exhibits a strong decatenase activity. The sequence is that of Type 2 DNA topoisomerase 6 subunit B from Methanosarcina acetivorans (strain ATCC 35395 / DSM 2834 / JCM 12185 / C2A).